Consider the following 421-residue polypeptide: ATP-dependent RNA helicase RhlB (421 aa).

The Q motif motif lies at 9 to 37 (QKFSDFALHPKVVEALEKKGFHNCTPIQA). One can recognise a Helicase ATP-binding domain in the interval 40-219 (LPLTLAGRDV…FEQMNNAEYI (180 aa)). ATP is bound at residue 53–60 (AQTGTGKT). A DEAD box motif is present at residues 165 to 168 (DEAD). The Helicase C-terminal domain maps to 245-390 (RLLQTLIEEE…VSKYNPDALM (146 aa)). A disordered region spans residues 392–421 (DLPKPLRLTRPRTGNGPRRTGAPRNRRRSG). Residues 402 to 414 (PRTGNGPRRTGAP) are compositionally biased toward low complexity.

The protein belongs to the DEAD box helicase family. RhlB subfamily. In terms of assembly, component of the RNA degradosome, which is a multiprotein complex involved in RNA processing and mRNA degradation.

It is found in the cytoplasm. It catalyses the reaction ATP + H2O = ADP + phosphate + H(+). DEAD-box RNA helicase involved in RNA degradation. Has RNA-dependent ATPase activity and unwinds double-stranded RNA. The sequence is that of ATP-dependent RNA helicase RhlB from Escherichia fergusonii (strain ATCC 35469 / DSM 13698 / CCUG 18766 / IAM 14443 / JCM 21226 / LMG 7866 / NBRC 102419 / NCTC 12128 / CDC 0568-73).